A 222-amino-acid chain; its full sequence is MSGLGRLFGRGKKEKGPTPEEAIQKLKETEKILIKKQEFLEQKIEQELQAAKKHGTKNKRAALQALRRKKRLEQQLAQTDGTLSTLEFQREAIENATTNAEVLRTMELAAQGLKKAYQDMDIDKVDELMADITEQQEVAQQISDAISRPVGFGDDVDEDELLEELEELEQEELARELLHVGDEEEEPPVALPSAPSTHLPAEPAPKADEDEAELKQLAEWVS.

Disordered regions lie at residues 1-21 (MSGL…TPEE) and 177-222 (LLHV…EWVS). The tract at residues 1–116 (MSGLGRLFGR…ELAAQGLKKA (116 aa)) is interaction with phosphoinosides. The tract at residues 1–150 (MSGLGRLFGR…QISDAISRPV (150 aa)) is intramolecular interaction with C-terminus. Coiled-coil stretches lie at residues 20–105 (EEAI…VLRT) and 155–180 (DVDE…LLHV). The interval 151–222 (GFGDDVDEDE…ELKQLAEWVS (72 aa)) is intramolecular interaction with N-terminus. The residue at position 196 (Ser196) is a Phosphoserine.

It belongs to the SNF7 family. Probable core component of the endosomal sorting required for transport complex III (ESCRT-III). ESCRT-III components are thought to multimerize to form a flat lattice on the perimeter membrane of the endosome. Several assembly forms of ESCRT-III may exist that interact and act sequentially. Self-associates; overexpression leads to the assembly of filaments that curve and associate to create circular rings. Interacts with CHMP2A. Interacts with CHMP3; the interaction requires the release of CHMP4A autoinhibition. Interacts with CHMP4B. Interacts with CHMP4C. Interacts with CHMP6. Interacts with VPS4A. Interacts with PDCD6IP; the interaction is direct.

It is found in the cytoplasmic vesicle membrane. It localises to the late endosome membrane. In terms of biological role, probable core component of the endosomal sorting required for transport complex III (ESCRT-III) which is involved in multivesicular bodies (MVBs) formation and sorting of endosomal cargo proteins into MVBs. MVBs contain intraluminal vesicles (ILVs) that are generated by invagination and scission from the limiting membrane of the endosome and mostly are delivered to lysosomes enabling degradation of membrane proteins, such as stimulated growth factor receptors, lysosomal enzymes and lipids. The MVB pathway appears to require the sequential function of ESCRT-O, -I,-II and -III complexes. ESCRT-III proteins mostly dissociate from the invaginating membrane before the ILV is released. The ESCRT machinery also functions in topologically equivalent membrane fission events, such as the terminal stages of cytokinesis and the budding of enveloped viruses (lentiviruses). ESCRT-III proteins are believed to mediate the necessary vesicle extrusion and/or membrane fission activities, possibly in conjunction with the AAA ATPase VPS4. When overexpressed, membrane-assembled circular arrays of CHMP4A filaments can promote or stabilize negative curvature and outward budding. CHMP4A/B/C are required for the exosomal release of SDCBP, CD63 and syndecan. The sequence is that of Charged multivesicular body protein 4a (CHMP4A) from Bos taurus (Bovine).